The following is a 297-amino-acid chain: N-acetylmuramic acid 6-phosphate etherase (297 aa).

Residues 56–219 (AIEAFNKGGR…STISMIGIGK (164 aa)) form the SIS domain. Residue glutamate 84 is the Proton donor of the active site. The active site involves glutamate 115.

The protein belongs to the GCKR-like family. MurNAc-6-P etherase subfamily. In terms of assembly, homodimer.

It carries out the reaction N-acetyl-D-muramate 6-phosphate + H2O = N-acetyl-D-glucosamine 6-phosphate + (R)-lactate. Its pathway is amino-sugar metabolism; N-acetylmuramate degradation. Its function is as follows. Specifically catalyzes the cleavage of the D-lactyl ether substituent of MurNAc 6-phosphate, producing GlcNAc 6-phosphate and D-lactate. In Lactococcus lactis subsp. lactis (strain IL1403) (Streptococcus lactis), this protein is N-acetylmuramic acid 6-phosphate etherase.